The chain runs to 324 residues: Protoheme IX farnesyltransferase 2 (324 aa).

9 helical membrane passes run 39–59, 63–83, 115–135, 137–157, 166–186, 192–212, 239–259, 260–280, and 302–322; these read LIKP…MLLA, IPSP…AGSA, HALV…WATT, LLSA…YTLV, IVWG…GVTG, ALVM…SLAM, IVVF…ATGW, LYTA…HRLH, and LMIV…VLGW.

The protein belongs to the UbiA prenyltransferase family. Protoheme IX farnesyltransferase subfamily.

The protein resides in the cell membrane. The enzyme catalyses heme b + (2E,6E)-farnesyl diphosphate + H2O = Fe(II)-heme o + diphosphate. Its pathway is porphyrin-containing compound metabolism; heme O biosynthesis; heme O from protoheme: step 1/1. Converts heme B (protoheme IX) to heme O by substitution of the vinyl group on carbon 2 of heme B porphyrin ring with a hydroxyethyl farnesyl side group. In Saccharopolyspora erythraea (strain ATCC 11635 / DSM 40517 / JCM 4748 / NBRC 13426 / NCIMB 8594 / NRRL 2338), this protein is Protoheme IX farnesyltransferase 2.